Reading from the N-terminus, the 160-residue chain is Phosphopantetheine adenylyltransferase (160 aa).

Ser-9 provides a ligand contact to substrate. Residues 9 to 10 (SL) and His-17 contribute to the ATP site. Substrate-binding residues include Lys-41, Leu-74, and Lys-88. ATP is bound by residues 89–91 (GIR), Glu-99, and 123–129 (YLHLSST).

This sequence belongs to the bacterial CoaD family. In terms of assembly, homohexamer. It depends on Mg(2+) as a cofactor.

It is found in the cytoplasm. It catalyses the reaction (R)-4'-phosphopantetheine + ATP + H(+) = 3'-dephospho-CoA + diphosphate. Its pathway is cofactor biosynthesis; coenzyme A biosynthesis; CoA from (R)-pantothenate: step 4/5. Functionally, reversibly transfers an adenylyl group from ATP to 4'-phosphopantetheine, yielding dephospho-CoA (dPCoA) and pyrophosphate. The protein is Phosphopantetheine adenylyltransferase of Renibacterium salmoninarum (strain ATCC 33209 / DSM 20767 / JCM 11484 / NBRC 15589 / NCIMB 2235).